The sequence spans 469 residues: UDP-N-acetylmuramate--L-alanine ligase (469 aa).

An ATP-binding site is contributed by 112–118 (GTHGKTT).

The protein belongs to the MurCDEF family.

Its subcellular location is the cytoplasm. The catalysed reaction is UDP-N-acetyl-alpha-D-muramate + L-alanine + ATP = UDP-N-acetyl-alpha-D-muramoyl-L-alanine + ADP + phosphate + H(+). It participates in cell wall biogenesis; peptidoglycan biosynthesis. Cell wall formation. In Methylibium petroleiphilum (strain ATCC BAA-1232 / LMG 22953 / PM1), this protein is UDP-N-acetylmuramate--L-alanine ligase.